The primary structure comprises 472 residues: Glutamate--tRNA ligase 1 (472 aa).

The 'HIGH' region signature appears at 9 to 19 (PSPTGLLHVGN). A compositionally biased stretch (basic and acidic residues) spans 112-131 (AMAEKRPPRYDGTWRDRDPS). The segment at 112–133 (AMAEKRPPRYDGTWRDRDPSEA) is disordered. Positions 238–242 (KLSKR) match the 'KMSKS' region motif. Lys-241 serves as a coordination point for ATP.

The protein belongs to the class-I aminoacyl-tRNA synthetase family. Glutamate--tRNA ligase type 1 subfamily. As to quaternary structure, monomer.

It is found in the cytoplasm. The enzyme catalyses tRNA(Glu) + L-glutamate + ATP = L-glutamyl-tRNA(Glu) + AMP + diphosphate. Catalyzes the attachment of glutamate to tRNA(Glu) in a two-step reaction: glutamate is first activated by ATP to form Glu-AMP and then transferred to the acceptor end of tRNA(Glu). In Gluconobacter oxydans (strain 621H) (Gluconobacter suboxydans), this protein is Glutamate--tRNA ligase 1.